We begin with the raw amino-acid sequence, 735 residues long: Glutamine-dependent NAD(+) synthetase (735 aa).

The CN hydrolase domain occupies 4-274 (LRVATCNLNQ…VEVLDALVDL (271 aa)). Residue Glu44 is the Proton acceptor; for glutaminase activity of the active site. Catalysis depends on Lys113, which acts as the For glutaminase activity. Catalysis depends on Cys174, which acts as the Nucleophile; for glutaminase activity. Residues 324-711 (YHRPEEEIAF…STEGELRRRK (388 aa)) form a ligase region. Residue 354–361 (PLSGGADS) participates in ATP binding. Residue Ser356 is part of the active site.

The protein in the C-terminal section; belongs to the NAD synthetase family.

The catalysed reaction is deamido-NAD(+) + L-glutamine + ATP + H2O = L-glutamate + AMP + diphosphate + NAD(+) + H(+). Its pathway is cofactor biosynthesis; NAD(+) biosynthesis; NAD(+) from deamido-NAD(+) (L-Gln route): step 1/1. The polypeptide is Glutamine-dependent NAD(+) synthetase (Oryza sativa subsp. indica (Rice)).